Reading from the N-terminus, the 415-residue chain is Serine hydroxymethyltransferase (415 aa).

(6S)-5,6,7,8-tetrahydrofolate is bound by residues leucine 117 and 121–123; that span reads GHL. Lysine 226 carries the N6-(pyridoxal phosphate)lysine modification. Residues glutamate 241 and 349 to 351 contribute to the (6S)-5,6,7,8-tetrahydrofolate site; that span reads SPF.

The protein belongs to the SHMT family. In terms of assembly, homodimer. The cofactor is pyridoxal 5'-phosphate.

The protein resides in the cytoplasm. It catalyses the reaction (6R)-5,10-methylene-5,6,7,8-tetrahydrofolate + glycine + H2O = (6S)-5,6,7,8-tetrahydrofolate + L-serine. Its pathway is one-carbon metabolism; tetrahydrofolate interconversion. It participates in amino-acid biosynthesis; glycine biosynthesis; glycine from L-serine: step 1/1. In terms of biological role, catalyzes the reversible interconversion of serine and glycine with tetrahydrofolate (THF) serving as the one-carbon carrier. This reaction serves as the major source of one-carbon groups required for the biosynthesis of purines, thymidylate, methionine, and other important biomolecules. Also exhibits THF-independent aldolase activity toward beta-hydroxyamino acids, producing glycine and aldehydes, via a retro-aldol mechanism. This is Serine hydroxymethyltransferase from Geotalea daltonii (strain DSM 22248 / JCM 15807 / FRC-32) (Geobacter daltonii).